The chain runs to 439 residues: N5-carboxyaminoimidazole ribonucleotide synthase (439 aa).

Residues lysine 113, lysine 160, 197 to 200, glutamate 205, and 283 to 284 contribute to the ATP site; these read EERV and NE. Residues 117–313 form the ATP-grasp domain; it reads RRRLAALGAA…QFEQHLRAVL (197 aa).

Belongs to the PurK/PurT family. As to quaternary structure, homodimer.

The enzyme catalyses 5-amino-1-(5-phospho-beta-D-ribosyl)imidazole + hydrogencarbonate + ATP = 5-carboxyamino-1-(5-phospho-D-ribosyl)imidazole + ADP + phosphate + 2 H(+). It functions in the pathway purine metabolism; IMP biosynthesis via de novo pathway; 5-amino-1-(5-phospho-D-ribosyl)imidazole-4-carboxylate from 5-amino-1-(5-phospho-D-ribosyl)imidazole (N5-CAIR route): step 1/2. In terms of biological role, catalyzes the ATP-dependent conversion of 5-aminoimidazole ribonucleotide (AIR) and HCO(3)(-) to N5-carboxyaminoimidazole ribonucleotide (N5-CAIR). The polypeptide is N5-carboxyaminoimidazole ribonucleotide synthase (Mycobacterium leprae (strain TN)).